The primary structure comprises 123 residues: Small ribosomal subunit protein uS13 (123 aa).

The disordered stretch occupies residues 95–123; the sequence is GLPVRGQSSKTNARTRKGPRRSVMSRKKK. The segment covering 107 to 123 has biased composition (basic residues); that stretch reads ARTRKGPRRSVMSRKKK.

The protein belongs to the universal ribosomal protein uS13 family. Part of the 30S ribosomal subunit. Forms a loose heterodimer with protein S19. Forms two bridges to the 50S subunit in the 70S ribosome.

Functionally, located at the top of the head of the 30S subunit, it contacts several helices of the 16S rRNA. In the 70S ribosome it contacts the 23S rRNA (bridge B1a) and protein L5 of the 50S subunit (bridge B1b), connecting the 2 subunits; these bridges are implicated in subunit movement. Contacts the tRNAs in the A and P-sites. The chain is Small ribosomal subunit protein uS13 from Maridesulfovibrio salexigens (strain ATCC 14822 / DSM 2638 / NCIMB 8403 / VKM B-1763) (Desulfovibrio salexigens).